We begin with the raw amino-acid sequence, 233 residues long: NAD-dependent protein deacylase (233 aa).

In terms of domain architecture, Deacetylase sirtuin-type spans 1 to 230 (MKNIMILSGA…ALDIENFMKD (230 aa)). 9-28 (GAGLSAPSGLKTFRDNDGLW) is a binding site for NAD(+). Residues Y53 and R56 each coordinate substrate. Residue 88–91 (QNVD) coordinates NAD(+). Residue H106 is the Proton acceptor of the active site. Zn(2+) is bound by residues C114, C117, C133, and C136. Residues 172 to 174 (GTS) and 200 to 202 (NLE) contribute to the NAD(+) site.

The protein belongs to the sirtuin family. Class III subfamily. Requires Zn(2+) as cofactor.

The protein localises to the cytoplasm. It carries out the reaction N(6)-acetyl-L-lysyl-[protein] + NAD(+) + H2O = 2''-O-acetyl-ADP-D-ribose + nicotinamide + L-lysyl-[protein]. It catalyses the reaction N(6)-succinyl-L-lysyl-[protein] + NAD(+) + H2O = 2''-O-succinyl-ADP-D-ribose + nicotinamide + L-lysyl-[protein]. Functionally, NAD-dependent lysine deacetylase and desuccinylase that specifically removes acetyl and succinyl groups on target proteins. Modulates the activities of several proteins which are inactive in their acylated form. The polypeptide is NAD-dependent protein deacylase (Campylobacter jejuni subsp. jejuni serotype O:2 (strain ATCC 700819 / NCTC 11168)).